The chain runs to 134 residues: MTGGGKSGGKASGSKNAQSRSSKAGLAFPVGRVHRLLRKGNYAQRVGAGAPVYLAAVLEYLAAEILELAGNAARDNKKTRIIPRHLQLAIRNDEELNKLLGHVTIAQGGVLPNIHQNLLPKKTGKTGKNASQEL.

Gly residues predominate over residues 1–11; the sequence is MTGGGKSGGKA. The tract at residues 1–25 is disordered; sequence MTGGGKSGGKASGSKNAQSRSSKAG. An N6-acetyllysine mark is found at Lys6 and Lys10. Residue Gln107 is modified to N5-methylglutamine. Position 131 is a phosphoserine (Ser131). The [ST]-Q motif motif lies at 131–132; the sequence is SQ.

Belongs to the histone H2A family. In terms of assembly, the nucleosome is a histone octamer containing two molecules each of H2A, H2B, H3 and H4 assembled in one H3-H4 heterotetramer and two H2A-H2B heterodimers. The octamer wraps approximately 147 bp of DNA. Post-translationally, phosphorylated to form H2AS128ph (gamma-H2A) in response to DNA double-strand breaks (DSBs) generated by exogenous genotoxic agents and by stalled replication forks. Phosphorylation is dependent on the DNA damage checkpoint kinases mec-1/ATR and tel-1/ATM, spreads on either side of a detected DSB site and may mark the surrounding chromatin for recruitment of proteins required for DNA damage signaling and repair. Gamma-H2A is removed from the DNA prior to the strand invasion-primer extension step of the repair process and subsequently dephosphorylated. Dephosphorylation is necessary for efficient recovery from the DNA damage checkpoint. Acetylated by esa-1 to form H2AK4ac and H2AK7ac.

Its subcellular location is the nucleus. It localises to the chromosome. Its function is as follows. Core component of nucleosome which plays a central role in DNA double strand break (DSB) repair. Nucleosomes wrap and compact DNA into chromatin, limiting DNA accessibility to the cellular machineries which require DNA as a template. Histones thereby play a central role in transcription regulation, DNA repair, DNA replication and chromosomal stability. DNA accessibility is regulated via a complex set of post-translational modifications of histones, also called histone code, and nucleosome remodeling. In Neurospora crassa (strain ATCC 24698 / 74-OR23-1A / CBS 708.71 / DSM 1257 / FGSC 987), this protein is Histone H2A (hh2a).